The following is a 326-amino-acid chain: MDIKLGKYKPVKEEYIKSFKDMLLLRRFEEKCGQLYGMGEIGGFCHLYIGQEAVISAVDMVKQKEDSMVTSYRDHAHIILAGTEPKYVLAELMGRATGCSKGKGGSMHLFDVPNKFYGGHGIVGAQVPIGTGLAFAEKYNGTNNICFTFLGDGAVNQGQVYEAFNMAALWGLPVVYIIENNEYSMGTSVARSTFMRDLYKKGESFGIKGFQLNGMDFEEMYDGVKQAAEYVRENSMPLILEVKTYRYRGHSMSDPAKYRSKEEVETYKERDPITEIRKIILENNYASEADLKEIEQSVKEIVKEAVEFSENSPLPNEEELYTQIYV.

As to quaternary structure, heterodimer of an alpha and a beta chain. It depends on thiamine diphosphate as a cofactor.

It catalyses the reaction N(6)-[(R)-lipoyl]-L-lysyl-[protein] + pyruvate + H(+) = N(6)-[(R)-S(8)-acetyldihydrolipoyl]-L-lysyl-[protein] + CO2. The pyruvate dehydrogenase complex catalyzes the overall conversion of pyruvate to acetyl-CoA and CO(2). It contains multiple copies of three enzymatic components: pyruvate dehydrogenase (E1), dihydrolipoamide acetyltransferase (E2) and lipoamide dehydrogenase (E3). This Rickettsia bellii (strain RML369-C) protein is Pyruvate dehydrogenase E1 component subunit alpha (pdhA).